Reading from the N-terminus, the 273-residue chain is Large ribosomal subunit protein uL2 (273 aa).

Disordered regions lie at residues 35 to 54 (DSKS…TRHI) and 222 to 273 (GMAM…RRNK). Polar residues predominate over residues 39–49 (KSGGRNNNGRI). Residues 229-239 (DHPHGGGEGRN) are compositionally biased toward basic and acidic residues. Positions 253-273 (KGFKTRKNKRTDKYIVRRRNK) are enriched in basic residues.

The protein belongs to the universal ribosomal protein uL2 family. As to quaternary structure, part of the 50S ribosomal subunit. Forms a bridge to the 30S subunit in the 70S ribosome.

One of the primary rRNA binding proteins. Required for association of the 30S and 50S subunits to form the 70S ribosome, for tRNA binding and peptide bond formation. It has been suggested to have peptidyltransferase activity; this is somewhat controversial. Makes several contacts with the 16S rRNA in the 70S ribosome. The protein is Large ribosomal subunit protein uL2 of Aeromonas salmonicida (strain A449).